We begin with the raw amino-acid sequence, 437 residues long: Nicotinate phosphoribosyltransferase (437 aa).

At His231 the chain carries Phosphohistidine; by autocatalysis.

It belongs to the NAPRTase family. In terms of processing, transiently phosphorylated on a His residue during the reaction cycle. Phosphorylation strongly increases the affinity for substrates and increases the rate of nicotinate D-ribonucleotide production. Dephosphorylation regenerates the low-affinity form of the enzyme, leading to product release.

It catalyses the reaction nicotinate + 5-phospho-alpha-D-ribose 1-diphosphate + ATP + H2O = nicotinate beta-D-ribonucleotide + ADP + phosphate + diphosphate. Its pathway is cofactor biosynthesis; NAD(+) biosynthesis; nicotinate D-ribonucleotide from nicotinate: step 1/1. Catalyzes the synthesis of beta-nicotinate D-ribonucleotide from nicotinate and 5-phospho-D-ribose 1-phosphate at the expense of ATP. In Vibrio vulnificus (strain YJ016), this protein is Nicotinate phosphoribosyltransferase.